The primary structure comprises 1224 residues: uncharacterized protein (1224 aa).

Disordered regions lie at residues 1–67 (MNQD…SSSI), 111–151 (QQSH…PPPL), 193–270 (QTEL…DPNI), 316–416 (DYNN…TVKK), 430–957 (SDSG…QEEK), and 1078–1167 (SFLP…TSHV). Over residues 10 to 48 (SFHSNNNSNSNHHHSYNNSINSGSSSSGSNNSSNNNSFN) the composition is skewed to low complexity. A compositionally biased stretch (acidic residues) spans 49–58 (DEIEGGEIQE). Composition is skewed to low complexity over residues 126-140 (SSSS…SSSS), 193-212 (QTEL…SSPP), and 228-241 (SAPT…SVSS). Residues 242 to 255 (LTQPQKPKSVQYSQ) show a composition bias toward polar residues. Residues 260 to 270 (EIREEKVDPNI) show a composition bias toward basic and acidic residues. A compositionally biased stretch (low complexity) spans 316–338 (DYNNSNSNNSNNNNNNNNSITEN). A compositionally biased stretch (polar residues) spans 341 to 353 (DKMINNQPSSTNS). Low complexity-rich tracts occupy residues 379-413 (TTTT…TTPT) and 430-450 (SDSG…TSTP). Basic and acidic residues-rich tracts occupy residues 451–585 (KSKD…DKKK) and 630–646 (EIDK…KVES). Residues 662 to 719 (TTTTTTSTSSSSSLPSLSSSSSSLPLPSSSSSSSSSSSSSSSSSSSSSSSSSSSTTST) are compositionally biased toward low complexity. Pro residues predominate over residues 727 to 750 (PPPPPQQPPPPPPQQPPPPPPPIN). Residues 755-892 (SEHDKKIIEK…SDRDRDRKDS (138 aa)) show a composition bias toward basic and acidic residues. The span at 893–933 (NSNNNSNNNNNNNNNNNNNNNNNNNNKKDNNNNNNNNNNNN) shows a compositional bias: low complexity. Basic and acidic residues predominate over residues 948–957 (TPKKTKQEEK). Residues 950-991 (KKTKQEEKLIRSQIDQIKEDAKDLKKLAKELQSKNQNECLEM) adopt a coiled-coil conformation. Low complexity-rich tracts occupy residues 1078–1108 (SFLP…TAPL) and 1114–1165 (NPSE…PNTS).

This is an uncharacterized protein from Dictyostelium discoideum (Social amoeba).